The primary structure comprises 211 residues: Endo-1,4-beta-xylanase 3 (211 aa).

An N-terminal signal peptide occupies residues 1 to 27 (MKVTAAFAGLLVTAFAAPVPEPVLVSR). One can recognise a GH11 domain in the interval 28-210 (SAGINYVQNY…GAGSASVTIS (183 aa)). The active-site Nucleophile is Glu-106. Cysteines 119 and 138 form a disulfide. Glu-197 acts as the Proton donor in catalysis.

It belongs to the glycosyl hydrolase 11 (cellulase G) family.

It is found in the secreted. The enzyme catalyses Endohydrolysis of (1-&gt;4)-beta-D-xylosidic linkages in xylans.. Its pathway is glycan degradation; xylan degradation. In Aspergillus kawachii (strain NBRC 4308) (White koji mold), this protein is Endo-1,4-beta-xylanase 3 (xynC).